The sequence spans 248 residues: PF03932 family protein CutC (248 aa).

The protein belongs to the CutC family. As to quaternary structure, homodimer.

It localises to the cytoplasm. The protein is PF03932 family protein CutC of Salmonella enteritidis PT4 (strain P125109).